The following is a 521-amino-acid chain: MAP kinase-activated protein kinase mak-1 (521 aa).

The span at methionine 1–methionine 12 shows a compositional bias: acidic residues. The disordered stretch occupies residues methionine 1 to phenylalanine 36. Basic and acidic residues predominate over residues glutamate 13 to aspartate 26. A Protein kinase domain is found at threonine 144–valine 405. Residues isoleucine 150 to valine 158 and lysine 173 contribute to the ATP site. Residue aspartate 266 is the Proton acceptor of the active site.

The protein belongs to the protein kinase superfamily. CAMK Ser/Thr protein kinase family. In terms of assembly, may interact (via protein kinase domain) with unc-22 (via protein kinase and CRD domains). Requires Mg(2+) as cofactor. Autophosphorylated in vitro. In terms of tissue distribution, expressed in body wall muscles (at protein level). Expressed in intestine.

Its subcellular location is the cytoplasm. It localises to the myofibril. The protein resides in the sarcomere. The protein localises to the a band. The enzyme catalyses L-seryl-[protein] + ATP = O-phospho-L-seryl-[protein] + ADP + H(+). It carries out the reaction L-threonyl-[protein] + ATP = O-phospho-L-threonyl-[protein] + ADP + H(+). Its function is as follows. Serine/threonine-protein kinase which may play a role in body wall muscle contraction. May phosphorylate unc-22/twitchin. This Caenorhabditis elegans protein is MAP kinase-activated protein kinase mak-1.